The sequence spans 276 residues: Diacetylchitobiose uptake system permease protein DasC (276 aa).

6 helical membrane passes run 14 to 34 (TAVVLFIGLVFPVYWMFATAF), 74 to 94 (LIVTVCAVVFSLVIALAGSFA), 105 to 125 (GFIVGFMLAQMAPWEVMVIAI), 137 to 157 (SLVPLTLFYMMMILPFTILTL), 186 to 206 (VILPLLAPGLMSTSMFGFITA), and 241 to 261 (GATMAASSLFAIPILILFVYL). The ABC transmembrane type-1 domain maps to 70-261 (VSNSLIVTVC…IPILILFVYL (192 aa)).

This sequence belongs to the binding-protein-dependent transport system permease family. The complex is composed of two ATP-binding proteins (MsiK), two transmembrane proteins (DasB and DasC) and a solute-binding protein (DasA).

The protein resides in the cell membrane. Its function is as follows. Part of the ABC transporter complex DasABC-MsiK involved in N,N'-diacetylchitobiose ((GlcNAc)2) uptake. Responsible for the translocation of the substrate across the membrane. The protein is Diacetylchitobiose uptake system permease protein DasC of Streptomyces coelicolor (strain ATCC BAA-471 / A3(2) / M145).